We begin with the raw amino-acid sequence, 84 residues long: ATP synthase subunit c (84 aa).

A run of 2 helical transmembrane segments spans residues 9-29 (LGLA…GCGI) and 57-77 (ILGL…NLII).

The protein belongs to the ATPase C chain family. In terms of assembly, F-type ATPases have 2 components, F(1) - the catalytic core - and F(0) - the membrane proton channel. F(1) has five subunits: alpha(3), beta(3), gamma(1), delta(1), epsilon(1). F(0) has three main subunits: a(1), b(2) and c(10-14). The alpha and beta chains form an alternating ring which encloses part of the gamma chain. F(1) is attached to F(0) by a central stalk formed by the gamma and epsilon chains, while a peripheral stalk is formed by the delta and b chains.

It localises to the cell membrane. In terms of biological role, f(1)F(0) ATP synthase produces ATP from ADP in the presence of a proton or sodium gradient. F-type ATPases consist of two structural domains, F(1) containing the extramembraneous catalytic core and F(0) containing the membrane proton channel, linked together by a central stalk and a peripheral stalk. During catalysis, ATP synthesis in the catalytic domain of F(1) is coupled via a rotary mechanism of the central stalk subunits to proton translocation. Functionally, key component of the F(0) channel; it plays a direct role in translocation across the membrane. A homomeric c-ring of between 10-14 subunits forms the central stalk rotor element with the F(1) delta and epsilon subunits. The chain is ATP synthase subunit c from Lawsonia intracellularis (strain PHE/MN1-00).